The chain runs to 410 residues: Arginine deiminase (410 aa).

Cys400 serves as the catalytic Amidino-cysteine intermediate.

It belongs to the arginine deiminase family.

It localises to the cytoplasm. It catalyses the reaction L-arginine + H2O = L-citrulline + NH4(+). It functions in the pathway amino-acid degradation; L-arginine degradation via ADI pathway; carbamoyl phosphate from L-arginine: step 1/2. The polypeptide is Arginine deiminase (arcA) (Lactococcus lactis subsp. lactis (strain IL1403) (Streptococcus lactis)).